We begin with the raw amino-acid sequence, 723 residues long: 1,3-alpha-isomaltosidase (723 aa).

The active-site Nucleophile is Asp-451. The active site involves Glu-454. Asp-516 functions as the Proton donor in the catalytic mechanism. Residue His-581 coordinates substrate.

Belongs to the glycosyl hydrolase 31 family.

It is found in the cytoplasm. The catalysed reaction is cyclobis-(1-&gt;3)-alpha-D-isomaltosyl + 2 H2O = 2 isomaltose. In terms of biological role, involved in the intracellular degradation of the cyclic tetrasaccharide cyclobis-(1-6)-alpha-nigerosyl (CNN) formed extracellularly from starch. Catalyzes the hydrolysis of the alpha-1,3-glucosidic linkage of cyclobis-(1-6)-alpha-nigerosyl (CNN) to yield isomaltose via a possible linear tetrasaccharide. It has a strong preference for the alpha-(1-3)-isomaltosyl moiety. This Kribbella flavida (strain DSM 17836 / JCM 10339 / NBRC 14399) protein is 1,3-alpha-isomaltosidase.